We begin with the raw amino-acid sequence, 208 residues long: uncharacterized protein (208 aa).

This is an uncharacterized protein from Bacillus subtilis (strain 168).